The following is a 310-amino-acid chain: Malate dehydrogenase (310 aa).

Residues 7–12 and Asp-32 contribute to the NAD(+) site; that span reads GAGNVG. Residues Arg-81 and Arg-87 each contribute to the substrate site. NAD(+) contacts are provided by residues Asn-94 and 117-119; that span reads VSN. Positions 119 and 150 each coordinate substrate. His-174 (proton acceptor) is an active-site residue.

This sequence belongs to the LDH/MDH superfamily. MDH type 3 family. In terms of assembly, homotetramer; arranged as a dimer of dimers.

It carries out the reaction (S)-malate + NAD(+) = oxaloacetate + NADH + H(+). Its function is as follows. Catalyzes the reversible oxidation of malate to oxaloacetate. In Chlorobaculum parvum (strain DSM 263 / NCIMB 8327) (Chlorobium vibrioforme subsp. thiosulfatophilum), this protein is Malate dehydrogenase.